Consider the following 734-residue polypeptide: MVRFKQTSEVLKIMRNIEQIRNIGITAHVDHGKTTLSDSLLSAAGLLSEKIAGQALALDYLDVEQKRQMTVKAANASLYHEYKGKPYLINLIDTPGHVDFQSKTIRALRVIDGAIVVVDAVEGVMTQTEMYLRVALEERVRPVLFINKIDRLIKELRSPNEIQQRLVQIVKDVNTLIATYADKEFQKAWLLDPMKGQAFGSARDRWGLTIPLVQQKGIKFSDIVDVYTKGKEAVAELQKAAPLHEAILDMVVKYVPNPRDAQRYRIPKIWHGDLNHEAVKYMMEADPNGPLVMLVNDIRVDPHAGLVATGRIYSGTLRAGEEVWLVNARVPQRVLQVSLYMGPYRELADEITAGNIAAALALEKARSGETVVAMKYKDSMTPFEKLRMITESVVTVAIEPKNPQQLTKLVDALYKLHLEDPSLIVKINEETGEYLLSGVGTLHIEIALTLLKDLYGLEVVASPPVIVYRETVRESSQVFEGKSPNKHNKFYISVAPLNEETLRLMSEGIIVEDMDARERAKILREQAGWDADEARRIMAIDENLNMLVDMTTGVQYLREIKDTVIQGFRLAMKEGPLAMEPVRGVKVVLHDAVVHEDPAHRGPAQIFPAVRNAIFAGFLTAKPTILEPILKLDIRTPMEYIGNISTVITKKRGKLIEVQQMETSARVIAEIPVSESFDIADMLRNVTAGKAIWGQEFSRWAPVPESMLMDLVSKIRTRKGLKPEPPKLEDFLSP.

The region spanning 18-259 (EQIRNIGITA…MVVKYVPNPR (242 aa)) is the tr-type G domain. Residues 27 to 34 (AHVDHGKT), 93 to 97 (DTPGH), and 147 to 150 (NKID) contribute to the GTP site. A Diphthamide modification is found at His600.

This sequence belongs to the TRAFAC class translation factor GTPase superfamily. Classic translation factor GTPase family. EF-G/EF-2 subfamily.

It is found in the cytoplasm. In terms of biological role, catalyzes the GTP-dependent ribosomal translocation step during translation elongation. During this step, the ribosome changes from the pre-translocational (PRE) to the post-translocational (POST) state as the newly formed A-site-bound peptidyl-tRNA and P-site-bound deacylated tRNA move to the P and E sites, respectively. Catalyzes the coordinated movement of the two tRNA molecules, the mRNA and conformational changes in the ribosome. This Desulfurococcus mucosus (Desulfurococcus mobilis) protein is Elongation factor 2 (fusA).